Consider the following 475-residue polypeptide: Argininosuccinate lyase (475 aa).

It belongs to the lyase 1 family. Argininosuccinate lyase subfamily.

It is found in the cytoplasm. The catalysed reaction is 2-(N(omega)-L-arginino)succinate = fumarate + L-arginine. Its pathway is amino-acid biosynthesis; L-arginine biosynthesis; L-arginine from L-ornithine and carbamoyl phosphate: step 3/3. The protein is Argininosuccinate lyase of Streptomyces coelicolor (strain ATCC BAA-471 / A3(2) / M145).